A 464-amino-acid chain; its full sequence is Kynureninase (464 aa).

Methionine 1 bears the N-acetylmethionine mark. Pyridoxal 5'-phosphate-binding positions include leucine 137, threonine 138, 165–168 (FPSD), serine 221, aspartate 250, histidine 253, and tyrosine 275. Lysine 276 is subject to N6-(pyridoxal phosphate)lysine. 2 residues coordinate pyridoxal 5'-phosphate: tryptophan 305 and asparagine 333.

It belongs to the kynureninase family. In terms of assembly, homodimer. It depends on pyridoxal 5'-phosphate as a cofactor.

It is found in the cytoplasm. The protein localises to the cytosol. The enzyme catalyses L-kynurenine + H2O = anthranilate + L-alanine + H(+). The catalysed reaction is 3-hydroxy-L-kynurenine + H2O = 3-hydroxyanthranilate + L-alanine + H(+). The protein operates within amino-acid degradation; L-kynurenine degradation; L-alanine and anthranilate from L-kynurenine: step 1/1. It participates in cofactor biosynthesis; NAD(+) biosynthesis; quinolinate from L-kynurenine: step 2/3. Catalyzes the cleavage of L-kynurenine (L-Kyn) and L-3-hydroxykynurenine (L-3OHKyn) into anthranilic acid (AA) and 3-hydroxyanthranilic acid (3-OHAA), respectively. Has a preference for the L-3-hydroxy form. Also has cysteine-conjugate-beta-lyase activity. The protein is Kynureninase (Kynu) of Mus musculus (Mouse).